The chain runs to 319 residues: Acetyl-coenzyme A carboxylase carboxyl transferase subunit alpha (319 aa).

The 262-residue stretch at 35 to 296 (NIDEEVHRLR…KAQLLADLAD (262 aa)) folds into the CoA carboxyltransferase C-terminal domain.

It belongs to the AccA family. In terms of assembly, acetyl-CoA carboxylase is a heterohexamer composed of biotin carboxyl carrier protein (AccB), biotin carboxylase (AccC) and two subunits each of ACCase subunit alpha (AccA) and ACCase subunit beta (AccD).

It is found in the cytoplasm. The catalysed reaction is N(6)-carboxybiotinyl-L-lysyl-[protein] + acetyl-CoA = N(6)-biotinyl-L-lysyl-[protein] + malonyl-CoA. It functions in the pathway lipid metabolism; malonyl-CoA biosynthesis; malonyl-CoA from acetyl-CoA: step 1/1. Component of the acetyl coenzyme A carboxylase (ACC) complex. First, biotin carboxylase catalyzes the carboxylation of biotin on its carrier protein (BCCP) and then the CO(2) group is transferred by the carboxyltransferase to acetyl-CoA to form malonyl-CoA. The protein is Acetyl-coenzyme A carboxylase carboxyl transferase subunit alpha of Klebsiella pneumoniae (strain 342).